A 115-amino-acid chain; its full sequence is Large ribosomal subunit protein bL20 (115 aa).

This sequence belongs to the bacterial ribosomal protein bL20 family.

In terms of biological role, binds directly to 23S ribosomal RNA and is necessary for the in vitro assembly process of the 50S ribosomal subunit. It is not involved in the protein synthesizing functions of that subunit. In Synechococcus sp. (strain WH7803), this protein is Large ribosomal subunit protein bL20.